The sequence spans 542 residues: Putative cysteine ligase BshC (542 aa).

A coiled-coil region spans residues 458–487 (VAKNAAILQAQIEFLQHALERALLRKHETE).

This sequence belongs to the BshC family.

In terms of biological role, involved in bacillithiol (BSH) biosynthesis. May catalyze the last step of the pathway, the addition of cysteine to glucosamine malate (GlcN-Mal) to generate BSH. In Geobacillus kaustophilus (strain HTA426), this protein is Putative cysteine ligase BshC.